Here is a 179-residue protein sequence, read N- to C-terminus: Large ribosomal subunit protein uL5 (179 aa).

It belongs to the universal ribosomal protein uL5 family. In terms of assembly, part of the 50S ribosomal subunit; part of the 5S rRNA/L5/L18/L25 subcomplex. Contacts the 5S rRNA and the P site tRNA. Forms a bridge to the 30S subunit in the 70S ribosome.

This is one of the proteins that bind and probably mediate the attachment of the 5S RNA into the large ribosomal subunit, where it forms part of the central protuberance. In the 70S ribosome it contacts protein S13 of the 30S subunit (bridge B1b), connecting the 2 subunits; this bridge is implicated in subunit movement. Contacts the P site tRNA; the 5S rRNA and some of its associated proteins might help stabilize positioning of ribosome-bound tRNAs. The protein is Large ribosomal subunit protein uL5 of Geotalea daltonii (strain DSM 22248 / JCM 15807 / FRC-32) (Geobacter daltonii).